The following is a 122-amino-acid chain: Large ribosomal subunit protein uL14 (122 aa).

The protein belongs to the universal ribosomal protein uL14 family. Part of the 50S ribosomal subunit. Forms a cluster with proteins L3 and L19. In the 70S ribosome, L14 and L19 interact and together make contacts with the 16S rRNA in bridges B5 and B8.

Functionally, binds to 23S rRNA. Forms part of two intersubunit bridges in the 70S ribosome. In Ureaplasma parvum serovar 3 (strain ATCC 27815 / 27 / NCTC 11736), this protein is Large ribosomal subunit protein uL14.